A 299-amino-acid polypeptide reads, in one-letter code: ATP phosphoribosyltransferase (299 aa).

The protein belongs to the ATP phosphoribosyltransferase family. Long subfamily. As to quaternary structure, equilibrium between an active dimeric form, an inactive hexameric form and higher aggregates. Interconversion between the various forms is largely reversible and is influenced by the natural substrates and inhibitors of the enzyme. Mg(2+) serves as cofactor.

It is found in the cytoplasm. The enzyme catalyses 1-(5-phospho-beta-D-ribosyl)-ATP + diphosphate = 5-phospho-alpha-D-ribose 1-diphosphate + ATP. It functions in the pathway amino-acid biosynthesis; L-histidine biosynthesis; L-histidine from 5-phospho-alpha-D-ribose 1-diphosphate: step 1/9. Feedback inhibited by histidine. Catalyzes the condensation of ATP and 5-phosphoribose 1-diphosphate to form N'-(5'-phosphoribosyl)-ATP (PR-ATP). Has a crucial role in the pathway because the rate of histidine biosynthesis seems to be controlled primarily by regulation of HisG enzymatic activity. This is ATP phosphoribosyltransferase from Salmonella choleraesuis (strain SC-B67).